The chain runs to 513 residues: GMP synthase [glutamine-hydrolyzing] (513 aa).

Residues 9–198 (LILVLDFGSQ…VRRVCECKGQ (190 aa)) form the Glutamine amidotransferase type-1 domain. The Nucleophile role is filled by Cys-86. Catalysis depends on residues His-172 and Glu-174. The GMPS ATP-PPase domain maps to 199–388 (WTMENFIEIE…LGIPEHLVWR (190 aa)). Residue 226 to 232 (SGGVDSS) coordinates ATP.

In terms of assembly, homodimer.

It carries out the reaction XMP + L-glutamine + ATP + H2O = GMP + L-glutamate + AMP + diphosphate + 2 H(+). Its pathway is purine metabolism; GMP biosynthesis; GMP from XMP (L-Gln route): step 1/1. In terms of biological role, catalyzes the synthesis of GMP from XMP. The polypeptide is GMP synthase [glutamine-hydrolyzing] (Staphylococcus aureus (strain MSSA476)).